We begin with the raw amino-acid sequence, 256 residues long: Rano class II histocompatibility antigen, B alpha chain (256 aa).

A signal peptide spans 1–23 (MPLSRALILGVLALTTMLSPCGG). Positions 24–111 (QDDIEADHVG…KRSNSTPAVN (88 aa)) are alpha-1. Residues 24–218 (QDDIEADHVG…IPAPMSELTE (195 aa)) lie on the Extracellular side of the membrane. The 99-residue stretch at 108–206 (PAVNEVPEAT…LDEPVLRHWE (99 aa)) folds into the Ig-like C1-type domain. The interval 112 to 205 (EVPEATVFSK…SLDEPVLRHW (94 aa)) is alpha-2. Cysteine 134 and cysteine 190 are oxidised to a cystine. Asparagine 145 carries an N-linked (GlcNAc...) asparagine glycan. Residues 206–218 (EPEIPAPMSELTE) form a connecting peptide region. The chain crosses the membrane as a helical span at residues 219–244 (TVVCALGLSVGLVGIVVGTIFIIQGL). Topologically, residues 245–256 (RSVAPSRHPGPL) are cytoplasmic.

This sequence belongs to the MHC class II family.

It is found in the membrane. In Rattus norvegicus (Rat), this protein is Rano class II histocompatibility antigen, B alpha chain (RT1-Ba).